Consider the following 699-residue polypeptide: Polyribonucleotide nucleotidyltransferase (699 aa).

2 residues coordinate Mg(2+): Asp-485 and Asp-491. The KH domain maps to 552 to 611 (PRITVIKINPEKIRDVIGKGGAVIRALTEETGTTIELEDDGTVKIASSNGEATKEAIRRI). The 69-residue stretch at 621 to 689 (GRIYNGKVIR…RQGRVRLSIK (69 aa)) folds into the S1 motif domain.

Belongs to the polyribonucleotide nucleotidyltransferase family. Component of the RNA degradosome, which is a multiprotein complex involved in RNA processing and mRNA degradation. The cofactor is Mg(2+).

It localises to the cytoplasm. It carries out the reaction RNA(n+1) + phosphate = RNA(n) + a ribonucleoside 5'-diphosphate. Its function is as follows. Involved in mRNA degradation. Catalyzes the phosphorolysis of single-stranded polyribonucleotides processively in the 3'- to 5'-direction. In Shewanella baltica (strain OS223), this protein is Polyribonucleotide nucleotidyltransferase.